Here is a 237-residue protein sequence, read N- to C-terminus: MQQSKEERVHRVFEKISDHYDRMNSVISFKRHVAWRKDTMKRMNVQKGTKALDVCCGTADWTIALAEAVGPSGEVYGLDFSRNMLKVGEEKVKERGFQHVTLVHGNAMSLPFPDNTFDYVTIGFGLRNVPDYMTVLKEMYRVAKPGGKVVCLETSQPTLIGFRQLYYAYFRYIMPFFGKIFAKSYEEYSWLQESAREFPGMDELADMFRQAGFVNVQVKPYTFGVAAMHLGHKPDGR.

S-adenosyl-L-methionine contacts are provided by residues Thr-58, Asp-79, and 106-107 (NA).

It belongs to the class I-like SAM-binding methyltransferase superfamily. MenG/UbiE family.

The enzyme catalyses a 2-demethylmenaquinol + S-adenosyl-L-methionine = a menaquinol + S-adenosyl-L-homocysteine + H(+). It participates in quinol/quinone metabolism; menaquinone biosynthesis; menaquinol from 1,4-dihydroxy-2-naphthoate: step 2/2. In terms of biological role, methyltransferase required for the conversion of demethylmenaquinol (DMKH2) to menaquinol (MKH2). The chain is Demethylmenaquinone methyltransferase from Anoxybacillus flavithermus (strain DSM 21510 / WK1).